Consider the following 1197-residue polypeptide: Disease resistance-like protein CSA1 (1197 aa).

One can recognise a TIR domain in the interval 15–178 (PQDQVFINFR…IIIRKVKEIL (164 aa)). E89 is an active-site residue. In terms of domain architecture, NB-ARC spans 210–480 (RIKQLEEKLR…ACFRSQDENY (271 aa)). LRR repeat units lie at residues 614 to 636 (LNEVRYLHWLKFPLKEVPQDFNP), 638 to 659 (NLVDLKLPYSEIERVWEDNKDA), 694 to 716 (TALKEMHVDMENMKFLVFLNLRG), 728 to 749 (LISLKTLILSGCSKFKTFQVIS), 750 to 774 (DKLEALYLDGTAIKELPCDIGRLQR), 776 to 796 (VMLNMKGCKKLKRLPDSLGQL), 797 to 819 (KALEELILSGCSKLNEFPETWGN), 820 to 843 (MSRLEILLLDETAIKDMPKILSVR), 845 to 862 (LCLNKNEKISRLPDLLNK), and 863 to 889 (FSQLQWLHLKYCKNLTHVPQLPPNLQY).

The catalysed reaction is NAD(+) + H2O = ADP-D-ribose + nicotinamide + H(+). In terms of biological role, TIR-NB-LRR receptor-like protein that functions in photomorphogenic development. May function downstream of phytochrome B (phyB) signaling. This chain is Disease resistance-like protein CSA1, found in Arabidopsis thaliana (Mouse-ear cress).